The chain runs to 109 residues: Large ribosomal subunit protein uL24 (109 aa).

This sequence belongs to the universal ribosomal protein uL24 family. As to quaternary structure, part of the 50S ribosomal subunit.

Functionally, one of two assembly initiator proteins, it binds directly to the 5'-end of the 23S rRNA, where it nucleates assembly of the 50S subunit. Its function is as follows. One of the proteins that surrounds the polypeptide exit tunnel on the outside of the subunit. The chain is Large ribosomal subunit protein uL24 from Legionella pneumophila (strain Paris).